The sequence spans 498 residues: MTSRGNHGSKTSSDKHLGDSDFVVVANRLPVDQVRLPDGTAIWKRSPGGLVTALEPLLRQRRGAWVGWPGVINDNVDLDLTIKSIVQDGLTLYPVRLNTHDVAEYYEGFSNATLWPLYHDVIVKPIYHCEWWERYVDVNRRFAETTSRTAAYGGTVWVQDYQLQLVPKMLRIMRPDLTIGFFLHIPFPPVELFMQIPWRTEIIEGLLGADLVGFHLTSGAQNFLFLSRHLLGANTSRGLVGVRSRFGEVQLKSHTVQVGAFPISIDSKEIDQATRDRNVRRRAREIRAELGNPRKILLGVDRLDYTKGIDVRLRAFAELLAEGRAKRDDTVLVQLATPSRERVESYKILRNDIERQVGHINGEYGEVGHPVVHYLHRPIPRDELIAFYVASDVMLVTPLRDGMNLVAKEYVACRNDLGGALVLSEFTGAAAELRQAYLVNPHDLEGVKDTIEAALNQLAEEARRRMRSLRRQVLAHDVDRWARSFLDALAEAPARDAT.

Residue R28 participates in D-glucose 6-phosphate binding. 48–49 is a binding site for UDP-alpha-D-glucose; sequence GG. D-glucose 6-phosphate-binding residues include Y106 and D160. R302 and K307 together coordinate UDP-alpha-D-glucose. Residue R340 participates in D-glucose 6-phosphate binding. 405–409 is a binding site for UDP-alpha-D-glucose; that stretch reads LVAKE.

It belongs to the glycosyltransferase 20 family. As to quaternary structure, homotetramer.

The catalysed reaction is ADP-alpha-D-glucose + D-glucose 6-phosphate = alpha,alpha-trehalose 6-phosphate + ADP + H(+). It carries out the reaction CDP-alpha-D-glucose + D-glucose 6-phosphate = alpha,alpha-trehalose 6-phosphate + CDP + H(+). It catalyses the reaction GDP-alpha-D-glucose + D-glucose 6-phosphate = alpha,alpha-trehalose 6-phosphate + GDP + H(+). The enzyme catalyses TDP-alpha-D-glucose + D-glucose 6-phosphate = 5-methyl-UDP + alpha,alpha-trehalose 6-phosphate + H(+). The catalysed reaction is D-glucose 6-phosphate + UDP-alpha-D-glucose = alpha,alpha-trehalose 6-phosphate + UDP + H(+). The protein operates within glycan biosynthesis; trehalose biosynthesis. Probably involved in the osmoprotection via the biosynthesis of trehalose and in the production of glycogen and alpha-glucan via the TreS-Pep2 branch involved in the biosynthesis of maltose-1-phosphate (M1P). Catalyzes the transfer of glucose from UDP-glucose (UDP-Glc) to D-glucose 6-phosphate (Glc-6-P) to form trehalose-6-phosphate. Probably also able to use ADP-Glc, CDP-Glc, GDP-Glc and TDP-Glc as glucosyl donors. This Mycobacterium leprae (strain TN) protein is Trehalose-6-phosphate synthase.